We begin with the raw amino-acid sequence, 972 residues long: 116 kDa U5 small nuclear ribonucleoprotein component (972 aa).

At Met1 the chain carries N-acetylmethionine. Residues 1–53 (MDTDLYDEFGNYIGPELDSDEDDDELGRETKDLDEVDEDEDDDDVGDHDEDHP) form a disordered region. Composition is skewed to acidic residues over residues 17–26 (LDSDEDDDEL) and 34–48 (DEVD…VGDH). A Phosphoserine modification is found at Ser19. Residue Lys64 forms a Glycyl lysine isopeptide (Lys-Gly) (interchain with G-Cter in SUMO1); alternate linkage. Residue Lys64 forms a Glycyl lysine isopeptide (Lys-Gly) (interchain with G-Cter in SUMO2); alternate linkage. Thr86 is subject to Phosphothreonine. In terms of domain architecture, tr-type G spans 127-409 (ELIRNVTLCG…GIHLTKEELK (283 aa)). GTP is bound by residues 136 to 143 (GHLHHGKT), 204 to 208 (DTPGH), and 258 to 261 (NKID).

The protein belongs to the TRAFAC class translation factor GTPase superfamily. Classic translation factor GTPase family. EF-G/EF-2 subfamily. In terms of assembly, component of the U5 snRNP and the U4/U6-U5 tri-snRNP complex, a building block of the spliceosome. The U4/U6-U5 tri-snRNP complex is composed of the U4, U6 and U5 snRNAs and at least PRPF3, PRPF4, PRPF6, PRPF8, PRPF31, SNRNP200, TXNL4A, SNRNP40, DDX23, CD2BP2, PPIH, SNU13, EFTUD2, SART1 and USP39. Component of the pre-catalytic, catalytic and post-catalytic spliceosome complexes. Component of the minor spliceosome, which splices U12-type introns. Within this complex, interacts with CRIPT. Interacts with ERBB4 and PRPF8. Interacts with PIH1D1. Interacts with RPAP3 and URI1 in a ZNHIT2-dependent manner. Interacts with NRDE2. Interacts with FAM50A. Interacts with UBL5.

The protein resides in the nucleus. In terms of biological role, required for pre-mRNA splicing as component of the spliceosome, including pre-catalytic, catalytic and post-catalytic spliceosomal complexes. Component of the U5 snRNP and the U4/U6-U5 tri-snRNP complex, a building block of the spliceosome. As a component of the minor spliceosome, involved in the splicing of U12-type introns in pre-mRNAs. In Bos taurus (Bovine), this protein is 116 kDa U5 small nuclear ribonucleoprotein component (EFTUD2).